A 143-amino-acid polypeptide reads, in one-letter code: Sperm mitochondrial-associated cysteine-rich protein (143 aa).

Phosphoserine is present on residues Ser37, Ser44, and Ser110. Residues 101 to 143 (CCSSENKTESDSDTSGQTLEKGSQSPQSPPGAQGNWNQKKSNK) form a disordered region. Residues 113–126 (DTSGQTLEKGSQSP) are compositionally biased toward polar residues. At Ser128 the chain carries Phosphoserine. Residues 134 to 143 (GNWNQKKSNK) are compositionally biased toward polar residues.

As to expression, testis. Is selectively expressed in the spermatids of seminiferous tubules.

The protein resides in the cytoplasm. It localises to the mitochondrion membrane. Its function is as follows. Involved in sperm motility. Its absence is associated with genetic background dependent male infertility. Infertility may be due to reduced sperm motility in the female reproductive tract and inability to penetrate the oocyte zona pellucida. The chain is Sperm mitochondrial-associated cysteine-rich protein (Smcp) from Mus musculus (Mouse).